The primary structure comprises 467 residues: Mothers against decapentaplegic homolog 2 (467 aa).

N-acetylserine is present on serine 2. The residue at position 8 (threonine 8) is a Phosphothreonine. Positions proline 10–proline 176 constitute an MH1 domain. Position 19 is an N6-acetyllysine (lysine 19). Zn(2+) contacts are provided by cysteine 74, cysteine 149, cysteine 161, and histidine 166. Polar residues predominate over residues proline 207–isoleucine 217. The disordered stretch occupies residues proline 207 to proline 251. Threonine 220 is subject to Phosphothreonine. Residues proline 221–tyrosine 225 carry the PY-motif motif. A compositionally biased stretch (polar residues) spans serine 233 to threonine 243. Serine 240 carries the post-translational modification Phosphoserine; by CAMK2. Phosphoserine is present on residues serine 245, serine 250, serine 255, serine 458, serine 460, and serine 464. Positions tryptophan 274 to serine 467 constitute an MH2 domain. Serine 465 and serine 467 each carry phosphoserine; by TGFBR1.

Belongs to the dwarfin/SMAD family. As to quaternary structure, monomer; in the absence of TGF-beta. Heterodimer; in the presence of TGF-beta. Forms a heterodimer with co-SMAD, SMAD4, in the nucleus to form the transactivation complex SMAD2/SMAD4. Found in a complex with SMAD3 and TRIM33 upon addition of TGF-beta. Identified in a complex that contains at least ZNF451, SMAD2, SMAD3 and SMAD4. Interacts (via the MH2 domain) with ZFYVE9; may form trimers with the SMAD4 co-SMAD. Interacts with TAZ/WWRT1. Interacts with FOXH1. Interacts with SNW1. Interacts with CREB-binding protein (CBP) and EP300. Interacts with SNON. Interacts with ALK4/ACVR1B. Interacts with SKOR1. Interacts with SKOR2. Interacts with PRDM16. Interacts (via MH2 domain) with LEMD3. Interacts with RBPMS. Interacts with WWP1. Interacts (dephosphorylated form, via the MH1 and MH2 domains) with RANBP3 (via its C-terminal R domain); the interaction results in the export of dephosphorylated SMAD3 out of the nucleus and termination of the TGF-beta signaling. Interacts with PDPK1 (via PH domain). Interacts with DAB2; the interactions are enhanced upon TGF-beta stimulation. Interacts with USP15. Interacts with PPP5C. Interacts with LDLRAD4 (via the SMAD interaction motif). Interacts (via MH2 domain) with PMEPA1 (via the SMAD interaction motif). Interacts with ZFHX3. Interacts with ZNF451. Interacts with SMURF2 when phosphorylated on Ser-465/467. Interacts with PPM1A. Interacts with TGF-beta. Interacts with TGFBR1. Interacts with TGIF. Interacts with SMAD3 and TRIM33. Interacts with ZNF580. Interacts with NEDD4L in response to TGF-beta. Interacts with HGS. Interacts with AIP1. Interacts with WWP1. Interacts with PML. Interacts weakly with ZNF8. Interacts (when phosphorylated) with RNF111; RNF111 acts as an enhancer of the transcriptional responses by mediating ubiquitination and degradation of SMAD2 inhibitors. Interacts with YAP1 (when phosphorylated at 'Ser-55'). Interacts when phosphorylated with IPO7; the interaction facilitates translocation of SMAD2 to the nucleus. Interacts with MTMR4; negatively regulates TGF-beta signaling through SMAD2 dephosphorylation and retention in endosomes. In response to TGF-beta, phosphorylated on the C-terminal SXS motif by TGF-beta and activin type 1 receptor kinases, phosphorylation declines progressively in a KMT5A-dependent manner. Phosphorylation in this motif is required for interaction with a number of proteins including SMURF2, SNON and SMAD4 in response to TGF-beta. Dephosphorylated in this motif by PPM1A leading to disruption of the SMAD2/3-SMAD4 complex, nuclear export and termination of the TGF-beta signaling. In response to decorin, the naturally occurring inhibitor of TGF-beta signaling, phosphorylated on Ser-240 by CaMK2. Phosphorylated by MAPK3 upon EGF stimulation; which increases transcriptional activity and stability, and is blocked by calmodulin. Phosphorylated by PDPK1. Post-translationally, acetylated on Lys-19 by coactivators in response to TGF-beta signaling, which increases transcriptional activity. In terms of processing, in response to TGF-beta, ubiquitinated by NEDD4L; which promotes its degradation. Monoubiquitinated, leading to prevent DNA-binding. Deubiquitination by USP15 alleviates inhibition and promotes activation of TGF-beta target genes. Ubiquitinated by RNF111, leading to its degradation: only SMAD2 proteins that are 'in use' are targeted by RNF111, RNF111 playing a key role in activating SMAD2 and regulating its turnover.

The protein resides in the cytoplasm. Its subcellular location is the nucleus. Receptor-regulated SMAD (R-SMAD) that is an intracellular signal transducer and transcriptional modulator activated by TGF-beta (transforming growth factor) and activin type 1 receptor kinases. Binds the TRE element in the promoter region of many genes that are regulated by TGF-beta and, on formation of the SMAD2/SMAD4 complex, activates transcription. Promotes TGFB1-mediated transcription of odontoblastic differentiation genes in dental papilla cells. Positively regulates PDPK1 kinase activity by stimulating its dissociation from the 14-3-3 protein YWHAQ which acts as a negative regulator. The protein is Mothers against decapentaplegic homolog 2 (SMAD2) of Pongo abelii (Sumatran orangutan).